A 315-amino-acid chain; its full sequence is Homoserine kinase (315 aa).

An ATP-binding site is contributed by 96-106 (PHSRGLGSSAA).

It belongs to the GHMP kinase family. Homoserine kinase subfamily.

The protein localises to the cytoplasm. The enzyme catalyses L-homoserine + ATP = O-phospho-L-homoserine + ADP + H(+). Its pathway is amino-acid biosynthesis; L-threonine biosynthesis; L-threonine from L-aspartate: step 4/5. Catalyzes the ATP-dependent phosphorylation of L-homoserine to L-homoserine phosphate. The protein is Homoserine kinase of Mycolicibacterium paratuberculosis (strain ATCC BAA-968 / K-10) (Mycobacterium paratuberculosis).